The primary structure comprises 545 residues: Probable protein kinase UbiB (545 aa).

The region spanning 124-502 (DFDETPLASA…RRSQGLARFY (379 aa)) is the Protein kinase domain. ATP is bound by residues 130–138 (LASASIAQV) and K153. D288 acts as the Proton acceptor in catalysis. A run of 2 helical transmembrane segments spans residues 498–517 (LARF…AILF) and 521–540 (VETI…LLGW).

Belongs to the ABC1 family. UbiB subfamily.

It is found in the cell inner membrane. Its pathway is cofactor biosynthesis; ubiquinone biosynthesis [regulation]. Functionally, is probably a protein kinase regulator of UbiI activity which is involved in aerobic coenzyme Q (ubiquinone) biosynthesis. The polypeptide is Probable protein kinase UbiB (Photobacterium profundum (strain SS9)).